A 1588-amino-acid polypeptide reads, in one-letter code: Paternally-expressed gene 3 protein (1588 aa).

Residues 46–128 (HQRFRNLIYV…TLLENYKEMY (83 aa)) form the SCAN box domain. 3 disordered regions span residues 128-230 (YQPE…ESYQ), 266-306 (DGHS…RRGI), and 319-349 (KFIK…MSDD). The segment covering 129–142 (QPEDDNNSDVTSDD) has biased composition (acidic residues). 4 stretches are compositionally biased toward basic and acidic residues: residues 143-152 (DMTRNRRESS), 161-182 (SGDR…DRWS), 206-225 (FEMD…RSQD), and 295-306 (PEAKKSTHRRGI). 3 consecutive C2H2-type zinc fingers follow at residues 454–476 (YVCD…QIMH), 507–529 (FECK…RKIH), and 565–587 (YECR…QKIH). A compositionally biased stretch (basic and acidic residues) spans 588-607 (FGDDKDNEREHERERERGET). A disordered region spans residues 588–610 (FGDDKDNEREHERERERGETFRP). The segment at 627 to 649 (YECKVCGETFLHSSSLKEHQKIH) adopts a C2H2-type 4 zinc-finger fold. A disordered region spans residues 838 to 930 (LVASKPPRSH…EFSVPSSNVR (93 aa)). Residues 868 to 881 (LNDKRQKIPARENP) show a composition bias toward basic and acidic residues. The segment at 969–991 (YECQECGECFAHSSDLTEHQKIH) adopts a C2H2-type 5 zinc-finger fold. Residues 1056–1104 (EKSHGEESQGENTDGEETHSEETHGQETIEDPVIQGSDMEDPQKDDPDD) are disordered. The span at 1071–1082 (EETHSEETHGQE) shows a compositional bias: basic and acidic residues. C2H2-type zinc fingers lie at residues 1107 to 1129 (YECE…QKVH), 1163 to 1185 (YECP…QRIH), 1225 to 1247 (IRCL…MRLH), 1282 to 1304 (FECA…VTVH), and 1332 to 1354 (YECK…KELH). The segment covering 1395 to 1415 (AEPEVEAAEPEVEAAEPEVEA) has biased composition (acidic residues). The disordered stretch occupies residues 1395–1495 (AEPEVEAAEP…GIEDPEEGED (101 aa)). A run of 7 repeats spans residues 1397–1403 (PEVEAAE), 1404–1410 (PEVEAAE), 1411–1417 (PEVEAAE), 1418–1422 (PNGEA), 1425–1429 (PDGEA), 1432–1436 (PIGEA), and 1439–1443 (PNGEA). The interval 1397–1417 (PEVEAAEPEVEAAEPEVEAAE) is 3 X 7 AA repeat of P-E-V-E-A-A-E. A 4 X 5 AA repeat of P-X-G-E-A region spans residues 1418-1443 (PNGEAEGPDGEAAEPIGEAGQPNGEA). Acidic residues-rich tracts occupy residues 1449–1466 (DADE…ERAE) and 1475–1495 (PEGD…EGED). 2 C2H2-type zinc fingers span residues 1505–1527 (YDCH…LKTH) and 1564–1586 (FKCD…QNTH).

Belongs to the krueppel C2H2-type zinc-finger protein family. In terms of assembly, homodimer. Interacts with SIAH1A and SIAH2. Interacts with TRAF2.

It is found in the nucleus. The protein resides in the cytoplasm. Induces apoptosis in cooperation with SIAH1A. Acts as a mediator between p53/TP53 and BAX in a neuronal death pathway that is activated by DNA damage. Acts synergistically with TRAF2 and inhibits TNF induced apoptosis through activation of NF-kappa-B. The polypeptide is Paternally-expressed gene 3 protein (PEG3) (Pan troglodytes (Chimpanzee)).